A 705-amino-acid chain; its full sequence is Elongation factor G (705 aa).

In terms of domain architecture, tr-type G spans 8-290 (HRYRNIGIMA…GVIHLLPSPA (283 aa)). GTP is bound by residues 17 to 24 (AHIDAGKT), 88 to 92 (DTPGH), and 142 to 145 (NKMD).

The protein belongs to the TRAFAC class translation factor GTPase superfamily. Classic translation factor GTPase family. EF-G/EF-2 subfamily.

It is found in the cytoplasm. Catalyzes the GTP-dependent ribosomal translocation step during translation elongation. During this step, the ribosome changes from the pre-translocational (PRE) to the post-translocational (POST) state as the newly formed A-site-bound peptidyl-tRNA and P-site-bound deacylated tRNA move to the P and E sites, respectively. Catalyzes the coordinated movement of the two tRNA molecules, the mRNA and conformational changes in the ribosome. This chain is Elongation factor G, found in Xylella fastidiosa (strain 9a5c).